The sequence spans 440 residues: Xaa-Pro dipeptidase (440 aa).

Residues Asp-244, Asp-255, His-336, Glu-381, and Glu-420 each coordinate Mn(2+).

The protein belongs to the peptidase M24B family. Bacterial-type prolidase subfamily. Mn(2+) is required as a cofactor.

The catalysed reaction is Xaa-L-Pro dipeptide + H2O = an L-alpha-amino acid + L-proline. Functionally, splits dipeptides with a prolyl residue in the C-terminal position. The chain is Xaa-Pro dipeptidase from Pseudoalteromonas translucida (strain TAC 125).